Here is a 148-residue protein sequence, read N- to C-terminus: Lysozyme C (148 aa).

An N-terminal signal peptide occupies residues 1–18 (MKVLILLGLVLLSVMVQG). A C-type lysozyme domain is found at 19-148 (KVFERCELAR…VSQYIQGCGV (130 aa)). 4 disulfide bridges follow: Cys-24/Cys-146, Cys-48/Cys-134, Cys-83/Cys-99, and Cys-95/Cys-113. Active-site residues include Glu-53 and Asp-71.

Belongs to the glycosyl hydrolase 22 family. As to quaternary structure, monomer.

It is found in the secreted. It catalyses the reaction Hydrolysis of (1-&gt;4)-beta-linkages between N-acetylmuramic acid and N-acetyl-D-glucosamine residues in a peptidoglycan and between N-acetyl-D-glucosamine residues in chitodextrins.. Its function is as follows. Lysozymes have primarily a bacteriolytic function; those in tissues and body fluids are associated with the monocyte-macrophage system and enhance the activity of immunoagents. The polypeptide is Lysozyme C (LYZ) (Saguinus oedipus (Cotton-top tamarin)).